Reading from the N-terminus, the 67-residue chain is Stomoxyn (67 aa).

A signal peptide spans 1–24 (MNFYKYLVVLVVLVLCLSATQTEA). Position 66 is a threonine amide (T66).

Constitutively expressed in the adult anterior midgut; proventriculus, thoracic and reservoir regions.

Its subcellular location is the secreted. Functionally, has antimicrobial activity against most Gram-positive and Gram-negative bacteria, filamentous fungi and yeasts tested. Has trypanolytic effect on T.b.rhodesiense and limited hemolytic activity against bovine red blood cells. Its function is as follows. May play an important role in protecting the stored blood in the anterior midgut from microorganisms prior to digestion. Adopts an amphipathic alpha-helical structure only in the presence of an organic solvent that mimics a phospholipid membrane. The protein is Stomoxyn of Stomoxys calcitrans (Stable fly).